Reading from the N-terminus, the 320-residue chain is Heterogeneous nuclear ribonucleoprotein A1 (320 aa).

Met-1 is subject to N-acetylmethionine. Ser-2 carries the post-translational modification N-acetylserine; in Heterogeneous nuclear ribonucleoprotein A1, N-terminally processed. At Ser-2 the chain carries Phosphoserine. Lys-3 bears the N6-acetyllysine; alternate mark. A Glycyl lysine isopeptide (Lys-Gly) (interchain with G-Cter in SUMO2); alternate cross-link involves residue Lys-3. Residues Ser-4 and Ser-6 each carry the phosphoserine modification. The interval 4 to 94 is globular A domain; sequence SESPKEPEQL…EPKRAVSRED (91 aa). Lys-8 participates in a covalent cross-link: Glycyl lysine isopeptide (Lys-Gly) (interchain with G-Cter in SUMO2). 2 RRM domains span residues 14 to 97 and 105 to 184; these read RKLF…DSQR and KKIF…LSKQ. Residue Ser-22 is modified to Phosphoserine. Lys-78 participates in a covalent cross-link: Glycyl lysine isopeptide (Lys-Gly) (interchain with G-Cter in SUMO2). The tract at residues 95–185 is globular B domain; that stretch reads SQRPGAHLTV…EVRKALSKQE (91 aa). A Glycyl lysine isopeptide (Lys-Gly) (interchain with G-Cter in SUMO) cross-link involves residue Lys-113. Residues Lys-179 and Lys-183 each participate in a glycyl lysine isopeptide (Lys-Gly) (interchain with G-Cter in SUMO2) cross-link. The disordered stretch occupies residues 182 to 216; the sequence is SKQEMASASSSQRGRSGSGNFGGGRGGGFGGNDNF. Ser-192 bears the Phosphoserine; by MKNK2 mark. Arg-194 carries the asymmetric dimethylarginine; alternate modification. Dimethylated arginine; alternate is present on Arg-194. The residue at position 194 (Arg-194) is an Omega-N-methylarginine; alternate. Residues 197-216 show a composition bias toward gly residues; sequence SGSGNFGGGRGGGFGGNDNF. A Phosphoserine modification is found at Ser-199. Asymmetric dimethylarginine; alternate occurs at positions 206, 218, 225, and 232. Arg-206 bears the Dimethylated arginine; alternate mark. Omega-N-methylarginine; alternate is present on residues Arg-206, Arg-218, Arg-225, and Arg-232. Positions 218–240 are RNA-binding RGG-box; the sequence is RGGNFSGRGGFGGSRGGGGYGGS. Position 225 is a dimethylated arginine; alternate (Arg-225). The nuclear targeting sequence stretch occupies residues 268-305; the sequence is NQSSNFGPMKGGNFGGRSLGPYGGGGQYFAKPRNQGGY. The segment covering 277 to 294 has biased composition (gly residues); it reads KGGNFGGRSLGPYGGGGQ. The interval 277-320 is disordered; it reads KGGNFGGRSLGPYGGGGQYFAKPRNQGGYGGSSSSSSYGSGRRF. Arg-284 is subject to Omega-N-methylarginine. Ser-285 bears the Phosphoserine mark. Residue Lys-298 is modified to N6-acetyllysine; alternate. A Glycyl lysine isopeptide (Lys-Gly) (interchain with G-Cter in SUMO2); alternate cross-link involves residue Lys-298. The residue at position 300 (Arg-300) is an Omega-N-methylarginine. The segment covering 308 to 320 has biased composition (low complexity); it reads SSSSSSYGSGRRF. Residue Ser-309 is modified to Phosphoserine. Phosphoserine; by MKNK2 occurs at positions 310, 311, and 312. Phosphoserine occurs at positions 313 and 316. At Arg-318 the chain carries Omega-N-methylarginine.

In terms of assembly, identified in the spliceosome C complex. Identified in a IGF2BP1-dependent mRNP granule complex containing untranslated mRNAs. Interacts with SEPT6, C9orf72, KHDRBS1, UBQLN2. Interacts with PPIA/CYPA. In terms of processing, sumoylated.

It is found in the nucleus. Its subcellular location is the cytoplasm. Involved in the packaging of pre-mRNA into hnRNP particles, transport of poly(A) mRNA from the nucleus to the cytoplasm and modulation of splice site selection. Plays a role in the splicing of pyruvate kinase PKM by binding repressively to sequences flanking PKM exon 9, inhibiting exon 9 inclusion and resulting in exon 10 inclusion and production of the PKM M2 isoform. Binds to the IRES and thereby inhibits the translation of the apoptosis protease activating factor APAF1. May bind to specific miRNA hairpins. The polypeptide is Heterogeneous nuclear ribonucleoprotein A1 (HNRNPA1) (Macaca mulatta (Rhesus macaque)).